A 141-amino-acid polypeptide reads, in one-letter code: uncharacterized protein (141 aa).

Helical transmembrane passes span 41–61 (LIML…NYLF) and 95–115 (IIFL…SGFF).

It is found in the cell membrane. This is an uncharacterized protein from Rickettsia prowazekii (strain Madrid E).